A 433-amino-acid chain; its full sequence is Pyrimidine-nucleoside phosphorylase (433 aa).

81–83 (KHS) is a phosphate binding site. 2 residues coordinate K(+): G88 and T90. Residues T92, 108 to 110 (KMS), and T120 each bind phosphate. R168 and K187 together coordinate substrate. Residues L243, A246, and E255 each coordinate K(+).

The protein belongs to the thymidine/pyrimidine-nucleoside phosphorylase family. Homodimer. K(+) is required as a cofactor.

The enzyme catalyses uridine + phosphate = alpha-D-ribose 1-phosphate + uracil. It catalyses the reaction thymidine + phosphate = 2-deoxy-alpha-D-ribose 1-phosphate + thymine. The catalysed reaction is 2'-deoxyuridine + phosphate = 2-deoxy-alpha-D-ribose 1-phosphate + uracil. Catalyzes phosphorolysis of the pyrimidine nucleosides uridine, thymidine and 2'-deoxyuridine with the formation of the corresponding pyrimidine base and ribose-1-phosphate. In Staphylococcus epidermidis (strain ATCC 35984 / DSM 28319 / BCRC 17069 / CCUG 31568 / BM 3577 / RP62A), this protein is Pyrimidine-nucleoside phosphorylase (pdp).